Here is a 207-residue protein sequence, read N- to C-terminus: Ras-related protein Rab-8A (207 aa).

GTP contacts are provided by Ser17, Gly18, Val19, Gly20, Lys21, Thr22, Cys23, Ser35, Ser39, and Thr40. Thr22 lines the Mg(2+) pocket. 2 consecutive short sequence motifs (switch) follow at residues 31–45 (DAFNSTFISTIGIDF) and 63–80 (DTAGQERFRTITTAYYRG). Residues Thr40 and Asp63 each contribute to the Mg(2+) site. GTP is bound at residue Gly66. Thr72 bears the Phosphothreonine mark. GTP-binding residues include Asn121, Lys122, Asp124, Ala152, and Lys153. Phosphoserine occurs at positions 181 and 185. Cysteine methyl ester is present on Cys204. Cys204 carries the S-geranylgeranyl cysteine lipid modification. A propeptide spans 205–207 (VLL) (removed in mature form).

This sequence belongs to the small GTPase superfamily. Rab family. In terms of assembly, interacts (GTP-bound form) with MICALL1; regulates RAB8A association with recycling endosomes. Interacts with MICALL2; competes with RAB13 and is involved in E-cadherin endocytic recycling. Interacts (GTP-bound form) with MICAL1, MICALCL, MICAL3, EHBP1 and EHBP1L1; at least in case of MICAL1, MICALCL, MICAL3 and EHBP1L1 two molecules of RAB8A can bind to one molecule of the effector protein; ternary complexes of RAB8A, RAB13 and either MICAL1 or EHBP1L1 are possible. Interacts with EHD1. Interacts with MAP4K2 and SYTL4. Interacts with SGSM1 and SGSM3. Interacts with RABIF, RIMS2, RPH3A and RPH3A. Interacts with OPTN. Interacts with RAB3IP, RAB3IP functions as guanine exchange factor (GEF). Interacts with MYO5B. Interacts with CIMAP3. Interacts with BIRC6/bruce. Interacts with OCRL. Interacts with AHI1. Interacts with DCDC1. Interacts with LRRK2; interaction facilitates phosphorylation of Thr-72. Interacts with RAB31P, GDI1, GDI2, CHM, CHML, RABGGTA, RABGGTB, TBC1D15 and INPP5B; these interactions are dependent on Thr-72 not being phosphorylated. Interacts with RILPL1 and RILPL2; these interactions are dependent on the phosphorylation of Thr-72 by LRRK2. Interacts with DZIP1; prevents inhibition by the GDP-dissociation inhibitor GDI2. Interacts (in GDP-bound form) with RAB3IP/Rabin8, RAB3IP functions as guanine exchange factor (GEF) towards RAB8A. Interacts (in GDP-bound form) with RPGR, RPGR functions as GEF towards RAB8A. Mg(2+) is required as a cofactor. Phosphorylation of Thr-72 in the switch II region by LRRK2 prevents the association of RAB regulatory proteins, including CHM, CHML and RAB GDP dissociation inhibitors GDI1 and GDI2. Phosphorylation by LRRK2 is required for localization to stressed lysosomes.

Its subcellular location is the cell membrane. The protein resides in the golgi apparatus. It is found in the endosome membrane. It localises to the recycling endosome membrane. The protein localises to the cell projection. Its subcellular location is the cilium. The protein resides in the cytoplasmic vesicle. It is found in the phagosome membrane. It localises to the cytoplasm. The protein localises to the cytoskeleton. Its subcellular location is the microtubule organizing center. The protein resides in the centrosome. It is found in the centriole. It localises to the cilium basal body. The protein localises to the midbody. Its subcellular location is the lysosome. The catalysed reaction is GTP + H2O = GDP + phosphate + H(+). With respect to regulation, regulated by guanine nucleotide exchange factors (GEFs) such as RAB3IP/Rabin8 and RPGR which promote the exchange of bound GDP for free GTP, GTPase activating proteins (GAPs) which increase the GTP hydrolysis activity, and GDP dissociation inhibitors (GDIs) which inhibit the dissociation of the nucleotide from the GTPase. Activated in response to insulin. Its function is as follows. The small GTPases Rab are key regulators of intracellular membrane trafficking, from the formation of transport vesicles to their fusion with membranes. Rabs cycle between an inactive GDP-bound form and an active GTP-bound form that is able to recruit to membranes different sets of downstream effectors directly responsible for vesicle formation, movement, tethering and fusion. RAB8A is involved in polarized vesicular trafficking and neurotransmitter release. Together with RAB11A, RAB3IP, the exocyst complex, PARD3, PRKCI, ANXA2, CDC42 and DNMBP promotes transcytosis of PODXL to the apical membrane initiation sites (AMIS), apical surface formation and lumenogenesis. Regulates the compacted morphology of the Golgi. Together with MYO5B and RAB11A participates in epithelial cell polarization. Also involved in membrane trafficking to the cilium and ciliogenesis. Together with MICALL2, may also regulate adherens junction assembly. May play a role in insulin-induced transport to the plasma membrane of the glucose transporter GLUT4 and therefore play a role in glucose homeostasis. Involved in autophagy. Participates in the export of a subset of neosynthesized proteins through a Rab8-Rab10-Rab11-dependent endososomal export route. Targeted to and stabilized on stressed lysosomes through LRRK2 phosphorylation. Suppresses stress-induced lysosomal enlargement through EHBP1 and EHNP1L1 effector proteins. The protein is Ras-related protein Rab-8A (RAB8A) of Canis lupus familiaris (Dog).